Reading from the N-terminus, the 152-residue chain is 3-hydroxyacyl-[acyl-carrier-protein] dehydratase FabZ (152 aa).

Residue His58 is part of the active site.

This sequence belongs to the thioester dehydratase family. FabZ subfamily.

It is found in the cytoplasm. The catalysed reaction is a (3R)-hydroxyacyl-[ACP] = a (2E)-enoyl-[ACP] + H2O. In terms of biological role, involved in unsaturated fatty acids biosynthesis. Catalyzes the dehydration of short chain beta-hydroxyacyl-ACPs and long chain saturated and unsaturated beta-hydroxyacyl-ACPs. This is 3-hydroxyacyl-[acyl-carrier-protein] dehydratase FabZ from Prochlorococcus marinus subsp. pastoris (strain CCMP1986 / NIES-2087 / MED4).